A 330-amino-acid chain; its full sequence is Glycoprotein integral membrane protein 1 (330 aa).

The signal sequence occupies residues 1 to 23 (MEGAPLGPLALRLLLFVALPASG). Residues 24 to 268 (WLTTGAPEPP…VFPVFFQFLN (245 aa)) are Extracellular-facing. N-linked (GlcNAc...) asparagine glycans are attached at residues asparagine 46, asparagine 64, asparagine 166, and asparagine 191. Residues 269-289 (IMVVGITGAAVVITILKVLFP) form a helical membrane-spanning segment. Residues 290–330 (VSEYKGILQLDKVDVIPVTAINLYPDGPEKTAENLEDKTCI) lie on the Cytoplasmic side of the membrane.

The protein localises to the membrane. The protein is Glycoprotein integral membrane protein 1 (GINM1) of Pongo abelii (Sumatran orangutan).